A 306-amino-acid polypeptide reads, in one-letter code: Phosphoribosylaminoimidazole-succinocarboxamide synthase (306 aa).

N-acetylserine is present on Ser2.

This sequence belongs to the SAICAR synthetase family. In terms of assembly, monomer.

The enzyme catalyses 5-amino-1-(5-phospho-D-ribosyl)imidazole-4-carboxylate + L-aspartate + ATP = (2S)-2-[5-amino-1-(5-phospho-beta-D-ribosyl)imidazole-4-carboxamido]succinate + ADP + phosphate + 2 H(+). It functions in the pathway purine metabolism; IMP biosynthesis via de novo pathway; 5-amino-1-(5-phospho-D-ribosyl)imidazole-4-carboxamide from 5-amino-1-(5-phospho-D-ribosyl)imidazole-4-carboxylate: step 1/2. Its function is as follows. Catalyzes the reaction of 4-carboxy-5-aminoimidazole ribotide (CAIR) and aspartic acid with the formation of N-succinyl-5-amino-imidazole-4-carboxamide ribotide (SAICAR) in the purine biosynthesis pathway. This is Phosphoribosylaminoimidazole-succinocarboxamide synthase (ADE1) from Saccharomyces cerevisiae (strain ATCC 204508 / S288c) (Baker's yeast).